We begin with the raw amino-acid sequence, 80 residues long: Defensin-like protein 204 (80 aa).

An N-terminal signal peptide occupies residues 1 to 29 (MAKTFSSICFTTLLLVVLFISTEIPKSEA). 3 cysteine pairs are disulfide-bonded: C43–C64, C48–C73, and C52–C75.

This sequence belongs to the DEFL family.

The protein localises to the secreted. The polypeptide is Defensin-like protein 204 (Arabidopsis thaliana (Mouse-ear cress)).